The sequence spans 548 residues: Probable malate:quinone oxidoreductase (548 aa).

This sequence belongs to the MQO family. FAD serves as cofactor.

The enzyme catalyses (S)-malate + a quinone = a quinol + oxaloacetate. It participates in carbohydrate metabolism; tricarboxylic acid cycle; oxaloacetate from (S)-malate (quinone route): step 1/1. This Escherichia coli (strain SE11) protein is Probable malate:quinone oxidoreductase.